Here is a 139-residue protein sequence, read N- to C-terminus: Small ribosomal subunit protein uS12m (139 aa).

A mitochondrion-targeting transit peptide spans 1–29 (MSWPGLLYGLTTSLSRGLALAPQLWAARS).

The protein belongs to the universal ribosomal protein uS12 family. Component of the mitochondrial ribosome small subunit (28S) which comprises a 12S rRNA and about 30 distinct proteins.

The protein resides in the mitochondrion. The protein is Small ribosomal subunit protein uS12m (Mrps12) of Mus musculus (Mouse).